A 73-amino-acid chain; its full sequence is Putative defensin-like protein 57 (73 aa).

The N-terminal stretch at 1–25 (MRFTSMIFVLVVILINSLFNFNVLA) is a signal peptide. Disulfide bonds link cysteine 37-cysteine 71, cysteine 41-cysteine 64, cysteine 50-cysteine 69, and cysteine 54-cysteine 70.

This sequence belongs to the DEFL family.

It localises to the secreted. In Arabidopsis thaliana (Mouse-ear cress), this protein is Putative defensin-like protein 57.